The sequence spans 385 residues: 1-deoxy-D-xylulose 5-phosphate reductoisomerase (385 aa).

Residues Thr10, Gly11, Ser12, Ile13, Lys37, and Asn124 each contribute to the NADPH site. 1-deoxy-D-xylulose 5-phosphate is bound at residue Lys125. An NADPH-binding site is contributed by Glu126. Residue Asp150 participates in Mn(2+) binding. 1-deoxy-D-xylulose 5-phosphate-binding residues include Ser151, Glu152, Ser176, and His199. Residue Glu152 participates in Mn(2+) binding. Gly205 contributes to the NADPH binding site. Residues Ser212, Asn217, Lys218, and Glu221 each coordinate 1-deoxy-D-xylulose 5-phosphate. Glu221 is a Mn(2+) binding site.

The protein belongs to the DXR family. The cofactor is Mg(2+). Mn(2+) is required as a cofactor.

It carries out the reaction 2-C-methyl-D-erythritol 4-phosphate + NADP(+) = 1-deoxy-D-xylulose 5-phosphate + NADPH + H(+). It functions in the pathway isoprenoid biosynthesis; isopentenyl diphosphate biosynthesis via DXP pathway; isopentenyl diphosphate from 1-deoxy-D-xylulose 5-phosphate: step 1/6. Its function is as follows. Catalyzes the NADPH-dependent rearrangement and reduction of 1-deoxy-D-xylulose-5-phosphate (DXP) to 2-C-methyl-D-erythritol 4-phosphate (MEP). This chain is 1-deoxy-D-xylulose 5-phosphate reductoisomerase, found in Clostridium botulinum (strain Okra / Type B1).